A 468-amino-acid chain; its full sequence is Acid phosphatase PHO1 (468 aa).

The N-terminal stretch at 1 to 22 (MFSPILSLEIILALATLQSVFA) is a signal peptide. The active-site Nucleophile is His-84. 4 N-linked (GlcNAc...) asparagine glycosylation sites follow: Asn-163, Asn-196, Asn-256, and Asn-321. Asp-346 serves as the catalytic Proton donor. N-linked (GlcNAc...) asparagine glycosylation is found at Asn-360 and Asn-453.

Belongs to the histidine acid phosphatase family.

The catalysed reaction is a phosphate monoester + H2O = an alcohol + phosphate. The chain is Acid phosphatase PHO1 (PHO1) from Komagataella pastoris (Yeast).